We begin with the raw amino-acid sequence, 436 residues long: GTPase Der (436 aa).

EngA-type G domains are found at residues 4-167 (PTVA…PTEV) and 175-351 (IRFS…ESQN). GTP-binding positions include 10-17 (GRPNVGKS), 57-61 (DTGGI), 119-122 (NKVD), 181-188 (GRPNVGKS), 229-233 (DTAGM), and 294-297 (NKWD). The KH-like domain occupies 352–436 (RRISSAVLND…PIHLIARKRK (85 aa)).

It belongs to the TRAFAC class TrmE-Era-EngA-EngB-Septin-like GTPase superfamily. EngA (Der) GTPase family. Associates with the 50S ribosomal subunit.

In terms of biological role, GTPase that plays an essential role in the late steps of ribosome biogenesis. This Streptococcus thermophilus (strain ATCC BAA-491 / LMD-9) protein is GTPase Der.